Consider the following 1138-residue polypeptide: Exportin-6-B (1138 aa).

The Importin N-terminal domain occupies 31–97; that stretch reads IESLLNNFAQ…RSSLPKLLLS (67 aa). The segment covering 291-307 has biased composition (low complexity); it reads SVTTNTTSSVVNGGSSS. The tract at residues 291 to 315 is disordered; it reads SVTTNTTSSVVNGGSSSPPLHSAAP.

The protein belongs to the exportin family.

The protein resides in the nucleus. It is found in the cytoplasm. In terms of biological role, mediates the nuclear export of actin and profilin-actin complexes in somatic cells. Oocyte nuclei lack active actin export. Its function is as follows. Mediates the nuclear export of actin and profilin-actin complexes in somatic cells. The protein is Exportin-6-B (xpo6-b) of Xenopus laevis (African clawed frog).